A 286-amino-acid polypeptide reads, in one-letter code: Putative chaperone BssE (286 aa).

ATP is bound by residues 47–54 (GKQGCGKS) and 108–115 (GCVIHLEE).

The protein belongs to the CbbQ/NirQ/NorQ/GpvN family.

In terms of biological role, may have a role in assembly and/or activation of benzylsuccinate synthase. The sequence is that of Putative chaperone BssE (bssE) from Thauera aromatica.